The primary structure comprises 315 residues: GTPase Era (315 aa).

Residues arginine 21–proline 190 enclose the Era-type G domain. The segment at glycine 29–serine 36 is G1. Glycine 29–serine 36 is a GTP binding site. Positions glutamine 55–asparagine 59 are G2. The segment at aspartate 76–glycine 79 is G3. Residues aspartate 76–isoleucine 80 and asparagine 138–aspartate 141 contribute to the GTP site. A G4 region spans residues asparagine 138–aspartate 141. The interval phenylalanine 169–alanine 171 is G5. A KH type-2 domain is found at threonine 221–proline 297.

Belongs to the TRAFAC class TrmE-Era-EngA-EngB-Septin-like GTPase superfamily. Era GTPase family. As to quaternary structure, monomer.

The protein resides in the cytoplasm. It localises to the cell inner membrane. An essential GTPase that binds both GDP and GTP, with rapid nucleotide exchange. Plays a role in 16S rRNA processing and 30S ribosomal subunit biogenesis and possibly also in cell cycle regulation and energy metabolism. This is GTPase Era from Synechocystis sp. (strain ATCC 27184 / PCC 6803 / Kazusa).